Here is a 585-residue protein sequence, read N- to C-terminus: Eukaryotic translation initiation factor 3 subunit D (585 aa).

The span at 43-60 (LGRMADWTGDGKDRDRGG) shows a compositional bias: basic and acidic residues. Disordered regions lie at residues 43-62 (LGRM…GGRQ) and 109-152 (RGGG…NRSA). Residues 109 to 130 (RGGGTVFRGRGQRGVGQRGGRA) show a composition bias toward gly residues. The segment at 300–314 (SIDLVTVNENAADAP) is RNA gate. Residues 560 to 585 (VPPNTFEEDDEAAEEQEEKAEEESEE) are disordered. Residues 565–585 (FEEDDEAAEEQEEKAEEESEE) are compositionally biased toward acidic residues.

This sequence belongs to the eIF-3 subunit D family. In terms of assembly, component of the eukaryotic translation initiation factor 3 (eIF-3) complex.

It is found in the cytoplasm. MRNA cap-binding component of the eukaryotic translation initiation factor 3 (eIF-3) complex, which is involved in protein synthesis of a specialized repertoire of mRNAs and, together with other initiation factors, stimulates binding of mRNA and methionyl-tRNAi to the 40S ribosome. The eIF-3 complex specifically targets and initiates translation of a subset of mRNAs involved in cell proliferation. In the eIF-3 complex, eif3d specifically recognizes and binds the 7-methylguanosine cap of a subset of mRNAs. This is Eukaryotic translation initiation factor 3 subunit D from Neosartorya fischeri (strain ATCC 1020 / DSM 3700 / CBS 544.65 / FGSC A1164 / JCM 1740 / NRRL 181 / WB 181) (Aspergillus fischerianus).